We begin with the raw amino-acid sequence, 228 residues long: Rab-like protein 2B (228 aa).

GTP is bound by residues 28 to 35, 76 to 80, and 133 to 136; these read GDSAVGKS, DTAGQ, and NKID. Residues 200–228 are disordered; the sequence is LEQEEEDVPDQEQSSSIETPSEEAASPHS.

It belongs to the small GTPase superfamily. Rab family. In terms of assembly, interacts (in its GTP-bound form) with CEP19 (via residues 121-150); this interaction is required for its localization to the mother centriole and cilium basal body. Interacts (in its GTP-bound form) with the intraflagellar transport (IFT) complex B (via the IFT74-IFT81 heterodimer). Binding to CEP19 and the IFT74-IFT81 heterodimer is mutually exclusive. As to expression, expressed in the testis.

The protein resides in the cytoplasm. It localises to the cytoskeleton. It is found in the microtubule organizing center. Its subcellular location is the centrosome. The protein localises to the centriole. The protein resides in the cilium basal body. Functionally, small GTPase required for ciliation. Activated in a guanine nucleotide exchange factor (GEF)-independent manner via its intrinsic GDP for GTP nucleotide exchange ability. Involved in ciliary assembly by binding the intraflagellar transport (IFT) complex B from the large pool pre-docked at the base of the cilium and thus triggers its entry into the cilia. This is Rab-like protein 2B (RABL2B) from Homo sapiens (Human).